Here is a 122-residue protein sequence, read N- to C-terminus: Double-headed protease inhibitor, submandibular gland (122 aa).

2 consecutive Kazal-like domains span residues 10–70 (GGRK…NCDI) and 71–121 (ECTQ…QCES). Intrachain disulfides connect Cys16/Cys50, Cys28/Cys47, Cys36/Cys68, Cys72/Cys101, Cys79/Cys98, and Cys87/Cys119.

The protein resides in the secreted. Its function is as follows. This inhibitor is composed of two homologous actively inhibiting halves: one which inhibits trypsin, the other which inhibits elastase. This Meles meles (Eurasian badger) protein is Double-headed protease inhibitor, submandibular gland.